The following is a 129-amino-acid chain: Glycine cleavage system H protein (129 aa).

In terms of domain architecture, Lipoyl-binding spans 24-106 (TFTVGITEHA…FGDGWLFRIK (83 aa)). Position 65 is an N6-lipoyllysine (lysine 65).

The protein belongs to the GcvH family. As to quaternary structure, the glycine cleavage system is composed of four proteins: P, T, L and H. (R)-lipoate is required as a cofactor.

The glycine cleavage system catalyzes the degradation of glycine. The H protein shuttles the methylamine group of glycine from the P protein to the T protein. This chain is Glycine cleavage system H protein, found in Pseudoalteromonas translucida (strain TAC 125).